Reading from the N-terminus, the 164-residue chain is CDP-archaeol synthase (164 aa).

4 helical membrane passes run 3–23 (LFVFFALIWPPYVANGSAVLA), 53–73 (GLAIGVVLGTVVGYLPNLLHP), 77–97 (LLDALILSVAALLGDLLGAFI), and 126–146 (SLYADVPVEYIIAASVVTPII).

This sequence belongs to the CDP-archaeol synthase family. Mg(2+) serves as cofactor.

The protein localises to the cell membrane. The enzyme catalyses 2,3-bis-O-(geranylgeranyl)-sn-glycerol 1-phosphate + CTP + H(+) = CDP-2,3-bis-O-(geranylgeranyl)-sn-glycerol + diphosphate. Its pathway is membrane lipid metabolism; glycerophospholipid metabolism. Functionally, catalyzes the formation of CDP-2,3-bis-(O-geranylgeranyl)-sn-glycerol (CDP-archaeol) from 2,3-bis-(O-geranylgeranyl)-sn-glycerol 1-phosphate (DGGGP) and CTP. This reaction is the third ether-bond-formation step in the biosynthesis of archaeal membrane lipids. The sequence is that of CDP-archaeol synthase from Pyrobaculum arsenaticum (strain DSM 13514 / JCM 11321 / PZ6).